A 252-amino-acid polypeptide reads, in one-letter code: Ubiquinone biosynthesis O-methyltransferase (252 aa).

S-adenosyl-L-methionine contacts are provided by Arg45, Gly76, Asp97, and Met141.

Belongs to the methyltransferase superfamily. UbiG/COQ3 family.

It catalyses the reaction a 3-demethylubiquinol + S-adenosyl-L-methionine = a ubiquinol + S-adenosyl-L-homocysteine + H(+). The enzyme catalyses a 3-(all-trans-polyprenyl)benzene-1,2-diol + S-adenosyl-L-methionine = a 2-methoxy-6-(all-trans-polyprenyl)phenol + S-adenosyl-L-homocysteine + H(+). Its pathway is cofactor biosynthesis; ubiquinone biosynthesis. O-methyltransferase that catalyzes the 2 O-methylation steps in the ubiquinone biosynthetic pathway. This Caulobacter vibrioides (strain ATCC 19089 / CIP 103742 / CB 15) (Caulobacter crescentus) protein is Ubiquinone biosynthesis O-methyltransferase.